A 151-amino-acid polypeptide reads, in one-letter code: Large ribosomal subunit protein uL13 (151 aa).

The disordered stretch occupies residues 126 to 151; it reads YPGSNHPHEAQKPEKLTIQTIPGGER. The segment covering 131–140 has biased composition (basic and acidic residues); that stretch reads HPHEAQKPEK.

It belongs to the universal ribosomal protein uL13 family. In terms of assembly, part of the 50S ribosomal subunit.

Functionally, this protein is one of the early assembly proteins of the 50S ribosomal subunit, although it is not seen to bind rRNA by itself. It is important during the early stages of 50S assembly. The sequence is that of Large ribosomal subunit protein uL13 from Trichodesmium erythraeum (strain IMS101).